A 362-amino-acid chain; its full sequence is 3-dehydroquinate synthase (362 aa).

NAD(+) is bound by residues 71-76 (DGEQYK), 105-109 (GVVGD), 129-130 (TT), Lys142, Lys151, and 169-172 (CLNT). Positions 184, 247, and 264 each coordinate Zn(2+).

It belongs to the sugar phosphate cyclases superfamily. Dehydroquinate synthase family. Co(2+) serves as cofactor. The cofactor is Zn(2+). Requires NAD(+) as cofactor.

The protein localises to the cytoplasm. The enzyme catalyses 7-phospho-2-dehydro-3-deoxy-D-arabino-heptonate = 3-dehydroquinate + phosphate. Its pathway is metabolic intermediate biosynthesis; chorismate biosynthesis; chorismate from D-erythrose 4-phosphate and phosphoenolpyruvate: step 2/7. Functionally, catalyzes the conversion of 3-deoxy-D-arabino-heptulosonate 7-phosphate (DAHP) to dehydroquinate (DHQ). The polypeptide is 3-dehydroquinate synthase (Enterobacter sp. (strain 638)).